The sequence spans 341 residues: Protein huluwa (341 aa).

Over 1–36 the chain is Extracellular; sequence MVTLSPAYLPSDGGTQAASAAPSVEENWVVQPSLTL. A helical membrane pass occupies residues 37-57; it reads LVLLLVPCVLLLFFLNCFLLF. The Cytoplasmic portion of the chain corresponds to 58–341; it reads HRLPAFSLRK…PMMCSKQYWI (284 aa). A VPPNSP motif motif is present at residues 206 to 211; the sequence is VPPNTP.

Belongs to the huluwa family. In terms of assembly, interacts with axin1; leading to promote the tankyrase-mediated degradation of axin. Interacts with axin2; leading to promote the tankyrase-mediated degradation of axin.

Its subcellular location is the cell membrane. Its function is as follows. Key maternal determinant of the dorsal organizer and body axis formation in vertebrates that acts by promoting stabilization of beta-catenin (ctnnb1). Localizes on the plasma membrane of the future dorsal blastomeres in early blastulas and binds to and promotes the tankyrase-mediated degradation of axin (axin1 and axin2). Axin degradation results in stabilization and nuclear translocation of beta-catenin (ctnnb1) for activating organizer-specific target gene expression. This chain is Protein huluwa, found in Xenopus laevis (African clawed frog).